A 57-amino-acid chain; its full sequence is MLFKSLQSITSVNSIQKNQISSISVGSSQANNNAALLDAAALVVIPGLLTAAAVAHI.

A helical membrane pass occupies residues 34–54; the sequence is AALLDAAALVVIPGLLTAAAV.

It is found in the membrane. This is an uncharacterized protein from Dictyostelium discoideum (Social amoeba).